The following is a 402-amino-acid chain: APO protein 3, mitochondrial (402 aa).

The transit peptide at 1–13 directs the protein to the mitochondrion; it reads MQRRKLVEISIFV. Positions 37–59 are disordered; the sequence is NDEDPLYADVPKPPKDKSERKPY. A compositionally biased stretch (basic and acidic residues) spans 48 to 58; sequence KPPKDKSERKP. 2 consecutive APO domains span residues 127–213 and 294–380; these read RCRL…DLEK and TCGY…PVPD.

Belongs to the APO family.

Its subcellular location is the mitochondrion. Its function is as follows. May be involved in the stable assembly of several 4Fe-4S cluster-containing complexes of mitochondria. In Arabidopsis thaliana (Mouse-ear cress), this protein is APO protein 3, mitochondrial (APO3).